We begin with the raw amino-acid sequence, 118 residues long: Large ribosomal subunit protein bL20 (118 aa).

The protein belongs to the bacterial ribosomal protein bL20 family.

Its function is as follows. Binds directly to 23S ribosomal RNA and is necessary for the in vitro assembly process of the 50S ribosomal subunit. It is not involved in the protein synthesizing functions of that subunit. This chain is Large ribosomal subunit protein bL20, found in Azotobacter vinelandii (strain DJ / ATCC BAA-1303).